The following is an 831-amino-acid chain: Probable inactive serine/threonine-protein kinase DDB_G0274613 (831 aa).

The RING-type zinc-finger motif lies at 9-63; sequence CSICSEEVIDFAAIFSSNKKFGDKACKHNFCVSCLTYLMEYNTRNKKALCCPICR. Positions 83-348 form a coiled coil; the sequence is RKLSSAQIFL…LEEMKLLYQF (266 aa). Positions 414-787 constitute a Protein kinase domain; it reads QIHKVSIGNG…ANQAAFHKFF (374 aa). The segment at 657-703 is disordered; sequence NNNNNNNNNNNNNNNNNNNNNNNNNNNNNNNNNNNNNNNNNIESNFN.

The protein belongs to the protein kinase superfamily. CMGC Ser/Thr protein kinase family.

In Dictyostelium discoideum (Social amoeba), this protein is Probable inactive serine/threonine-protein kinase DDB_G0274613.